Consider the following 507-residue polypeptide: Xaa-Pro aminopeptidase 3 (507 aa).

The N-terminal 31 residues, 1 to 31, are a transit peptide targeting the mitochondrion; it reads MPWLLSAPKLVPAVANVRGLSGCMLCSQRRY. An interaction with TNFRSF1B region spans residues 54–79; sequence HPHLLRPGEVTPGLSQVEYALRRHKL. Substrate-binding residues include Tyr300, Asp331, Asp342, His424, His431, Glu451, and Glu475. The Mn(2+) site is built by Asp331, Asp342, and His424. Positions 451 and 475 each coordinate Mn(2+).

Belongs to the peptidase M24B family. In terms of assembly, homodimer. Isoform 1 interacts with TNFRSF1B/TNFR2 (activated) and TRAF2. Mn(2+) serves as cofactor. As to expression, isoform 1 and isoform 2 are widely expressed, with isoform 1 being more abundant.

It is found in the mitochondrion. It localises to the cytoplasm. The catalysed reaction is Release of any N-terminal amino acid, including proline, that is linked to proline, even from a dipeptide or tripeptide.. Catalyzes the removal of a penultimate prolyl residue from the N-termini of peptides, such as Leu-Pro-Ala. Also shows low activity towards peptides with Ala or Ser at the P1 position. Its function is as follows. Promotes TNFRSF1B-mediated phosphorylation of MAPK8/JNK1 and MAPK9/JNK2, suggesting a function as an adapter protein for TNFRSF1B; the effect is independent of XPNPEP3 peptidase activity. May inhibit apoptotic cell death induced via TNF-TNFRSF1B signaling. This Homo sapiens (Human) protein is Xaa-Pro aminopeptidase 3 (XPNPEP3).